The following is a 242-amino-acid chain: MGEASPPAPARRHLLVLLLLLSTLVIPSAAAPIHDADAQESSLGLTGLQSLLQGFSRLFLKGNLLRGIDSLFSAPMDFRGLPGNYHKEENQEHQLGNNTLSSHLQIDKMTDNKTGEVLISENVVASIQPAEGSFEGDLKVPRMEEKEALVPIQKATDSFHTELHPRVAFWIIKLPRRRSHQDALEGGHWLSEKRHRLQAIRDGLRKGTHKDVLEEGTESSSHSRLSPRKTHLLYILRPSRQL.

Residues 1–30 (MGEASPPAPARRHLLVLLLLLSTLVIPSAA) form the signal peptide. Asn-97 and Asn-112 each carry an N-linked (GlcNAc...) asparagine glycan.

As to quaternary structure, interacts with SLXL1; Co-localize in seminiferous tubules. Interacts with SLY. Post-translationally, N-glycosylated during spermatogenesis. Not N-glycosylated in mature sperm. As to expression, more highly expressed in adult testis than in fetal testis. Exclusively expressed in the testis (at protein level). Intense expression in stages II, III and IV of spermatogenesis, whereas expression is lower in stage I.

It localises to the secreted. The protein resides in the cytoplasmic vesicle. It is found in the secretory vesicle. Its subcellular location is the acrosome. In terms of biological role, involved in fertilization by facilitating sperm penetration of the zona pellucida. May promote spermatocyte apoptosis, thereby limiting sperm production. In adults, may reduce testosterone synthesis in Leydig cells. Is not essential either for development or fertility. In Homo sapiens (Human), this protein is Dickkopf-like protein 1.